A 217-amino-acid chain; its full sequence is Probable GTP-binding protein EngB (217 aa).

The EngB-type G domain occupies 27 to 201 (GGVEIAFAGR…AQTLSGWYLA (175 aa)). Residues 35–42 (GRSNAGKS), 62–66 (GRTQL), 80–83 (DLPG), 147–150 (TKAD), and 180–182 (FSS) each bind GTP. Residues Ser-42 and Thr-64 each coordinate Mg(2+).

The protein belongs to the TRAFAC class TrmE-Era-EngA-EngB-Septin-like GTPase superfamily. EngB GTPase family. It depends on Mg(2+) as a cofactor.

Its function is as follows. Necessary for normal cell division and for the maintenance of normal septation. This is Probable GTP-binding protein EngB from Aeromonas salmonicida (strain A449).